The sequence spans 719 residues: Capsid protein (719 aa).

Residues 647–678 (GDALPSRERKRQAWQDSTSEETESEAEAQEEK) are disordered. A compositionally biased stretch (acidic residues) spans 664–674 (TSEETESEAEA).

It belongs to the anelloviridae capsid protein family.

The protein localises to the virion. Self assemble to form an icosahedral capsid. The sequence is that of Capsid protein from Torque teno virus (isolate Human/Germany/KAV/2001) (TTV).